A 175-amino-acid polypeptide reads, in one-letter code: Ribosome-binding factor A (175 aa).

The disordered stretch occupies residues 125-175 (TAKHAGEADPYKSDAPEDVDIDEDDFDEEDIDLAGDDDIDEDANKDADSSK). A compositionally biased stretch (basic and acidic residues) spans 128-139 (HAGEADPYKSDA). Positions 140–165 (PEDVDIDEDDFDEEDIDLAGDDDIDE) are enriched in acidic residues. The segment covering 166-175 (DANKDADSSK) has biased composition (basic and acidic residues).

It belongs to the RbfA family. In terms of assembly, monomer. Binds 30S ribosomal subunits, but not 50S ribosomal subunits or 70S ribosomes.

The protein resides in the cytoplasm. Its function is as follows. One of several proteins that assist in the late maturation steps of the functional core of the 30S ribosomal subunit. Associates with free 30S ribosomal subunits (but not with 30S subunits that are part of 70S ribosomes or polysomes). Required for efficient processing of 16S rRNA. May interact with the 5'-terminal helix region of 16S rRNA. The chain is Ribosome-binding factor A from Pseudarthrobacter chlorophenolicus (strain ATCC 700700 / DSM 12829 / CIP 107037 / JCM 12360 / KCTC 9906 / NCIMB 13794 / A6) (Arthrobacter chlorophenolicus).